An 87-amino-acid chain; its full sequence is U3-theraphotoxin-Hhn1a 6 (87 aa).

The signal sequence occupies residues 1–24; sequence MVNMKASMFLTFAGLVLLFVVCYA. The propeptide occupies 25-52; that stretch reads SESEKKEFPKEMLSSIFAVDNDFKQEER. Disulfide bonds link Cys54–Cys67, Cys61–Cys72, and Cys66–Cys79.

This sequence belongs to the neurotoxin 10 (Hwtx-1) family. 51 (Hntx-8) subfamily. Hntx-8 sub-subfamily. As to expression, expressed by the venom gland.

The protein localises to the secreted. In terms of biological role, ion channel inhibitor. This chain is U3-theraphotoxin-Hhn1a 6, found in Cyriopagopus hainanus (Chinese bird spider).